The following is a 182-amino-acid chain: MAAPRFGGPRRGGAQHELLEKAARLERGPPPRGDPEAVGRRAVAGDGGSCSGCWCWRRLFRGPRRKKLRQAHARAGKEAPERGLWGPSSLQRLLQRLATWRRRYLRRKERPDRLEEIPLLVLDRAQGGHEAAAGPQSSVPGRPAQAAPARQPRRRSATRSRSPVAPPVHAQDCFFLFGQQKQ.

Disordered stretches follow at residues 1–49 (MAAP…DGGS) and 126–171 (QGGH…VHAQ). The segment covering 17-39 (ELLEKAARLERGPPPRGDPEAVG) has biased composition (basic and acidic residues).

This is an uncharacterized protein from Homo sapiens (Human).